Here is a 79-residue protein sequence, read N- to C-terminus: Mipartoxin-3 (79 aa).

A signal peptide spans 1-21; that stretch reads MKTLLLTLVVVTIVCLDLGNS. Disulfide bonds link Cys24-Cys41, Cys34-Cys59, Cys63-Cys71, and Cys72-Cys77.

This sequence belongs to the three-finger toxin family. Short-chain subfamily. As to expression, expressed by the venom gland.

The protein resides in the secreted. Its function is as follows. Snake venom neurotoxin that blocks neuromuscular transmission, presenting a postsynaptic action through the nicotinic acetylcholine receptor (nAChR). Has no cytotoxic activity. The sequence is that of Mipartoxin-3 from Micrurus mipartitus (Red-tailed coral snake).